Consider the following 148-residue polypeptide: UPF0756 membrane protein YeaL (148 aa).

The next 4 helical transmembrane spans lie at 14 to 34 (ALGF…LIIV), 51 to 71 (LSIG…SGTL), 86 to 106 (LVAI…VTLM), and 121 to 141 (VLGV…AGLV).

Belongs to the UPF0756 family.

The protein localises to the cell membrane. The sequence is that of UPF0756 membrane protein YeaL from Shigella flexneri.